A 339-amino-acid chain; its full sequence is Ketol-acid reductoisomerase (NADP(+)) (339 aa).

The KARI N-terminal Rossmann domain maps to 1 to 182 (MRVYYDRDAD…GGGRAGIIET (182 aa)). Residues 24-27 (YGSQ), arginine 48, serine 51, serine 53, and 83-86 (DELQ) each bind NADP(+). Histidine 108 is an active-site residue. NADP(+) is bound at residue glycine 134. The KARI C-terminal knotted domain maps to 183 to 328 (TFKEECETDL…EKLREMMPWI (146 aa)). Mg(2+) contacts are provided by aspartate 191, glutamate 195, glutamate 227, and glutamate 231. Position 252 (serine 252) interacts with substrate.

Belongs to the ketol-acid reductoisomerase family. Requires Mg(2+) as cofactor.

It carries out the reaction (2R)-2,3-dihydroxy-3-methylbutanoate + NADP(+) = (2S)-2-acetolactate + NADPH + H(+). The catalysed reaction is (2R,3R)-2,3-dihydroxy-3-methylpentanoate + NADP(+) = (S)-2-ethyl-2-hydroxy-3-oxobutanoate + NADPH + H(+). It functions in the pathway amino-acid biosynthesis; L-isoleucine biosynthesis; L-isoleucine from 2-oxobutanoate: step 2/4. The protein operates within amino-acid biosynthesis; L-valine biosynthesis; L-valine from pyruvate: step 2/4. Its function is as follows. Involved in the biosynthesis of branched-chain amino acids (BCAA). Catalyzes an alkyl-migration followed by a ketol-acid reduction of (S)-2-acetolactate (S2AL) to yield (R)-2,3-dihydroxy-isovalerate. In the isomerase reaction, S2AL is rearranged via a Mg-dependent methyl migration to produce 3-hydroxy-3-methyl-2-ketobutyrate (HMKB). In the reductase reaction, this 2-ketoacid undergoes a metal-dependent reduction by NADPH to yield (R)-2,3-dihydroxy-isovalerate. The polypeptide is Ketol-acid reductoisomerase (NADP(+)) (Azorhizobium caulinodans (strain ATCC 43989 / DSM 5975 / JCM 20966 / LMG 6465 / NBRC 14845 / NCIMB 13405 / ORS 571)).